The primary structure comprises 210 residues: Transcriptional regulator GfcR (210 aa).

The tract at residues 39 to 60 (VERSGAATEPEPRAEPEGPDDI) is disordered. Basic and acidic residues predominate over residues 48 to 60 (PEPRAEPEGPDDI).

The protein belongs to the purine/pyrimidine phosphoribosyltransferase family. GfcR subfamily.

Interaction with effectors modulates GfcR activity. 2-keto-3-deoxy-6-phosphogluconate (KDPG), fructose-1,6-bisphosphate (FBP), 2-keto-3-deoxy-6-phosphogalactonate (KDPGal) and glycerol-3-phosphate (G3P), which are intermediates of sugar and glycerol degradation pathways, can act as inducer molecules. In terms of biological role, DNA-binding transcriptional regulator that functions as a regulator of central sugar catabolic pathways. Is both a local regulator of specific steps in the pathways for D-glucose and D-fructose degradation and a global regulator of hexose catabolism. In the presence of D-glucose, activates expression of the gene encoding the gluconate dehydratase (gad), which is involved in D-glucose catabolism via the semiphosphorylative Entner-Doudoroff (spED) pathway. In the presence of D-fructose, activates expression of the genes encoding the PTS system EIIC component (ptfC) and the fructose-1,6-bisphosphate aldolase (fba), which are involved in D-fructose uptake and degradation via the modified Embden-Meyerhof pathway. In addition, in the presence of D-glucose, D-fructose, D-galactose or glycerol, it activates expression of the genes encoding glyceraldehyde-3-phosphate dehydrogenase (gap) and pyruvate kinase (pykA), enzymes common to all four degradation pathways. Acts by binding directly to the promoter region of the regulated genes. The protein is Transcriptional regulator GfcR of Haloferax volcanii (strain ATCC 29605 / DSM 3757 / JCM 8879 / NBRC 14742 / NCIMB 2012 / VKM B-1768 / DS2) (Halobacterium volcanii).